The primary structure comprises 88 residues: Protein GOLVEN 10 (88 aa).

An N-terminal signal peptide occupies residues 1–22; sequence MSSIHVASMILLLFLFLHHSDS. Positions 23–75 are excised as a propeptide; that stretch reads RHLDNVHITASRFSLVKDQNVVSSSTSKEPVKVSRFVPGPLKHHHRRPPLLFA. Positions 44 to 88 are disordered; it reads VSSSTSKEPVKVSRFVPGPLKHHHRRPPLLFADYPKPSTRPPRHN. The residue at position 77 (Y77) is a Sulfotyrosine. Position 85 is a hydroxyproline (P85).

The protein belongs to the RGF family. As to quaternary structure, binds to LRR receptor-like serine/threonine-protein kinases RGI1, RGI2 and RGI3 to trigger their dimerization with SERK proteins and subsequent signaling. In terms of tissue distribution, expressed in roots, shoots, leaves and flowers.

It localises to the secreted. It is found in the endoplasmic reticulum. Signaling peptide (root growth factor) that maintains the postembryonic root stem cell niche. Regulates the pattern of root growth and lateral root development by modulating the length and the number of cortical cells in the root apical meristem (RAM), and the anticlinal asymmetric cell divisions in lateral root initiation cells. The chain is Protein GOLVEN 10 from Arabidopsis thaliana (Mouse-ear cress).